The primary structure comprises 543 residues: MFS-type transporter pyvG (543 aa).

Positions 24–71 (PPTEQQPGFQLPPPYRLAATRTQPQQQQEQEQEQEQAKPATRPPWNEP) are disordered. The N-linked (GlcNAc...) asparagine glycan is linked to N94. 12 consecutive transmembrane segments (helical) span residues 101-121 (LLVY…VAIF), 141-161 (LGMS…SPLS), 178-198 (IFLL…FLIL), 203-223 (GFFG…VTGL), 230-250 (LYVW…IAGF), 259-279 (WSMW…LFLP), 335-355 (PAIL…YSYF), 374-394 (GLIF…YFAF), 415-435 (LVPA…FAWT), 440-460 (LHWV…SLVI), 476-496 (ASLF…AIMW), and 512-532 (LLAG…WWGP).

This sequence belongs to the major facilitator superfamily. CAR1 family.

The protein resides in the cell membrane. MFS-type transporter; part of the gene cluster that mediates the biosynthesis of pyranoviolin A, a pyranonigrin analog with a C-3 methoxy group. May be involved in the secretion of pyranoviolin A. This Aspergillus violaceofuscus (strain CBS 115571) protein is MFS-type transporter pyvG.